Reading from the N-terminus, the 67-residue chain is Large ribosomal subunit protein bL35 (67 aa).

It belongs to the bacterial ribosomal protein bL35 family.

This chain is Large ribosomal subunit protein bL35, found in Acidiphilium cryptum (strain JF-5).